The chain runs to 867 residues: uncharacterized protein (867 aa).

A DNA-binding region (zn(2)-C6 fungal-type) is located at residues 76 to 108 (CDFCRQKKIRCDMDQSPRPGNACINCRKHHLDC). Disordered regions lie at residues 110-167 (FTRT…ITPV) and 217-257 (PQLA…NSNL). Composition is skewed to polar residues over residues 137–167 (SAKSSSPAVNGSVFSGNEASPSSRAPSITPV) and 248–257 (SISSYTNSNL).

The protein localises to the nucleus. This is an uncharacterized protein from Schizosaccharomyces pombe (strain 972 / ATCC 24843) (Fission yeast).